A 423-amino-acid chain; its full sequence is MSEDHGKDYTLESDSELRFEIEQKDAKVLVSLVSGFAELFGTELVKKKQYEFGVGAKVAIFTYQGCVLHVSGKMDVCYISKETPMVQYVNCHAALEQFRMEAEEKDRYGPVAMVVGPMDVGKSTLCRILLNYAVRVGRRPLYADLDVGQGSIAISGSVATILIERPANVEEGFAKTAPLVYHFGHKSPSGNSVLYNAVVSKMAEVTLQSLNSNKRTKSSGIIINTCGWVKGSGYAHLLHAAKAYGACAIFVLDQERLYNELLRDVPKGVHVVLLPKSGGVVERSKELRHEARDQRIKEYFYGNTRAPFYPFSFEVKFQDLRLYKIGAPPLPDSCMPIGMKAEDNKTKVVAVTPTPALIHHVLALSFAESVEDDVIGTNVAGFCCVTEVDMERQAVMLLSPQPRPLPPNALLLWSELQFMDNHT.

Residues Glu-16, Lys-57, and 119 to 124 each bind ATP; that span reads DVGKST.

It belongs to the Clp1 family. Clp1 subfamily.

The protein localises to the nucleus. Its function is as follows. Required for endonucleolytic cleavage during polyadenylation-dependent pre-mRNA 3'-end formation. This is Protein CLP1 homolog (cbc) from Drosophila simulans (Fruit fly).